A 374-amino-acid chain; its full sequence is DNA replication and repair protein RecF (374 aa).

Position 30 to 37 (30 to 37 (GHNAQGKT)) interacts with ATP.

This sequence belongs to the RecF family.

Its subcellular location is the cytoplasm. In terms of biological role, the RecF protein is involved in DNA metabolism; it is required for DNA replication and normal SOS inducibility. RecF binds preferentially to single-stranded, linear DNA. It also seems to bind ATP. This Limosilactobacillus reuteri (strain DSM 20016) (Lactobacillus reuteri) protein is DNA replication and repair protein RecF.